A 148-amino-acid chain; its full sequence is uncharacterized protein (148 aa).

Transmembrane regions (helical) follow at residues 20-42 (YYSKTFFYFLNILGLVFIIIANY), 52-74 (YFLMQIGIISVISSMVIEAVRCY), and 118-135 (IIRYVPSTVITFIICTYI).

It is found in the cell membrane. This is an uncharacterized protein from Rickettsia prowazekii (strain Madrid E).